The sequence spans 275 residues: Ammonia transport outward protein 3 (275 aa).

The Extracellular segment spans residues 1 to 84 (MTSSASSPQD…NCAKYTPHQF (84 aa)). Phosphoserine is present on Ser4. A helical membrane pass occupies residues 85-105 (ANPVPLGLASFSLSCLVLSLI). The Cytoplasmic segment spans residues 106-120 (NANVRGVTDGKWALS). Residues 121 to 141 (LFMFFGGAIELFAGLLCFVIG) form a helical membrane-spanning segment. Over 142–181 (DTYAMTVFSSFGGFWICYGYGLTDTDNLVSGYTDPTMLNN) the chain is Extracellular. The helical transmembrane segment at 182–202 (VIGFFLAGWTVFTFLMLMCTL) threads the bilayer. The Cytoplasmic portion of the chain corresponds to 203-207 (KSTWG). Residues 208–228 (LFLLLTFLDLTFLLLCIGTFI) traverse the membrane as a helical segment. The Extracellular segment spans residues 229-236 (DNNNLKMA). A helical transmembrane segment spans residues 237-257 (GGYFGILSSCCGWYSLYCSVV). The Cytoplasmic segment spans residues 258 to 275 (SPSNSYLAFRAHTMPNAP).

The protein belongs to the acetate uptake transporter (AceTr) (TC 2.A.96) family.

It is found in the cell membrane. Transporter protein required for ammonia export. Induced in rho(0) cells, probably to eliminate the excess ammonia that arises because of a potential defect in ammonia assimilation in those cells. In Saccharomyces cerevisiae (strain ATCC 204508 / S288c) (Baker's yeast), this protein is Ammonia transport outward protein 3 (ATO3).